Reading from the N-terminus, the 94-residue chain is Co-chaperonin GroES (94 aa).

It belongs to the GroES chaperonin family. In terms of assembly, heptamer of 7 subunits arranged in a ring. Interacts with the chaperonin GroEL.

Its subcellular location is the cytoplasm. Its function is as follows. Together with the chaperonin GroEL, plays an essential role in assisting protein folding. The GroEL-GroES system forms a nano-cage that allows encapsulation of the non-native substrate proteins and provides a physical environment optimized to promote and accelerate protein folding. GroES binds to the apical surface of the GroEL ring, thereby capping the opening of the GroEL channel. This chain is Co-chaperonin GroES, found in Halalkalibacterium halodurans (strain ATCC BAA-125 / DSM 18197 / FERM 7344 / JCM 9153 / C-125) (Bacillus halodurans).